The following is a 243-amino-acid chain: Chromosome partition protein MukE (243 aa).

Residues 223-243 form a disordered region; the sequence is LMENDTKSADEIDEEFDGEQE. Over residues 233 to 243 the composition is skewed to acidic residues; it reads EIDEEFDGEQE.

This sequence belongs to the MukE family. Interacts, and probably forms a ternary complex, with MukF and MukB. The complex formation is stimulated by calcium or magnesium.

It is found in the cytoplasm. It localises to the nucleoid. Its function is as follows. Involved in chromosome condensation, segregation and cell cycle progression. May participate in facilitating chromosome segregation by condensation DNA from both sides of a centrally located replisome during cell division. Probably acts via its interaction with MukB and MukF. The chain is Chromosome partition protein MukE from Haemophilus influenzae (strain ATCC 51907 / DSM 11121 / KW20 / Rd).